The sequence spans 210 residues: Stress-response A/B barrel domain-containing protein DABB1 (210 aa).

2 consecutive Stress-response A/B barrel domains span residues 5–100 (VEHV…AVDW) and 116–204 (IGKI…VVEF).

In terms of assembly, homodimer.

The protein resides in the cytoplasm. Its subcellular location is the cytosol. In terms of biological role, involved in defense against fungal pathogens. Possesses antifungal activity against diverse pathogenic fungi. In Arabidopsis thaliana (Mouse-ear cress), this protein is Stress-response A/B barrel domain-containing protein DABB1.